The following is a 94-amino-acid chain: Small ribosomal subunit protein uS19 (94 aa).

This sequence belongs to the universal ribosomal protein uS19 family.

Its function is as follows. Protein S19 forms a complex with S13 that binds strongly to the 16S ribosomal RNA. This chain is Small ribosomal subunit protein uS19 (rpsS), found in Lactobacillus acidophilus (strain ATCC 700396 / NCK56 / N2 / NCFM).